An 847-amino-acid chain; its full sequence is MDIRNEFLQFFQNKGHEIYPSMPLVPNDATLLFTNAGMVQFKDIFTGIVPRPSIPRAASSQLCMRAGGKHNDLENVGYTARHHTLFEMLGNFSFGDYFKEEAILFAWEFVTKNLGFKPKDLYISVHEKDDEAVKLWEKFVPVDRIKKMGDKDNFWQMGDSGPCGPCSEIYIDQGEKHFKGSEDYFGGEGDRFLEIWNLVFMQYERSNDGVLSPLPKPSIDTGMGLERVQALLEHKLNNFDSSLFAPLMEEISELTGLDYASEFQPSFRVVADHARAVAFLLAQEVHFNKEGRGYVLRRILRRALRHGYLMGLKEAFLYKVVGVVCEQFSNVHAYLKESKEMVMKECFEEEERFLETLESGMELFNLSLTHLNENKIFDGKIAFKLYDTFGFPLDLTNDMLRSHGACVDMQGFENCMQEQVKRSKASWKGKQNNADFSAILNAYAPNEFVGYETTECLANALGFFDSDFKEITEANPNQEVWVLLEKTPFYAEGGGAIGDRGTLFKDNEEAALVLDTKNFFGLNFSLLEIKKALKKGDQVIAQVSDERLEIAKHHSATHLLQSALREVLGSHVSQAGSLVESKRLRFDFSHAKALNDEELEKVEDLVNAQIFKHLTSQVEHMPLNQAKDKGALALFSEKYAENVRVVSFKEASIELCGGIHVENTGLIGGFRIVKESGVSSGVRRIEAVCGKAFYQLTKEENKELKNAKTLLKNNDVIAGINKLKESVKNSQKAPVSMDLPVEKIHGVNLVVGVVEQGDIKEMIDRLKSKHEKLLAIVFKKENERITLACGVKNVPIKANAWANEVAQILGGKGGGRDDFASAGGKDIENLQAALNLAKNTALKALEG.

Histidine 554, histidine 558, cysteine 656, and histidine 660 together coordinate Zn(2+).

The protein belongs to the class-II aminoacyl-tRNA synthetase family. Zn(2+) serves as cofactor.

The protein resides in the cytoplasm. It carries out the reaction tRNA(Ala) + L-alanine + ATP = L-alanyl-tRNA(Ala) + AMP + diphosphate. Functionally, catalyzes the attachment of alanine to tRNA(Ala) in a two-step reaction: alanine is first activated by ATP to form Ala-AMP and then transferred to the acceptor end of tRNA(Ala). Also edits incorrectly charged Ser-tRNA(Ala) and Gly-tRNA(Ala) via its editing domain. This chain is Alanine--tRNA ligase, found in Helicobacter pylori (strain J99 / ATCC 700824) (Campylobacter pylori J99).